A 227-amino-acid chain; its full sequence is PKHD-type hydroxylase BamMC406_4714 (227 aa).

One can recognise a Fe2OG dioxygenase domain in the interval 78-178 (KVFPPLFNRY…RVASFFWIQS (101 aa)). Fe cation-binding residues include histidine 96, aspartate 98, and histidine 159. Arginine 169 lines the 2-oxoglutarate pocket.

Fe(2+) is required as a cofactor. The cofactor is L-ascorbate.

This chain is PKHD-type hydroxylase BamMC406_4714, found in Burkholderia ambifaria (strain MC40-6).